A 469-amino-acid chain; its full sequence is Glutamate--tRNA ligase (469 aa).

A 'HIGH' region motif is present at residues 9–19 (PSPTGYLHVGG). The Zn(2+) site is built by C98, C100, C125, and D127. The 'KMSKS' region motif lies at 237–241 (KLSKR). K240 provides a ligand contact to ATP.

It belongs to the class-I aminoacyl-tRNA synthetase family. Glutamate--tRNA ligase type 1 subfamily. In terms of assembly, monomer. Requires Zn(2+) as cofactor.

The protein resides in the cytoplasm. The catalysed reaction is tRNA(Glu) + L-glutamate + ATP = L-glutamyl-tRNA(Glu) + AMP + diphosphate. Its function is as follows. Catalyzes the attachment of glutamate to tRNA(Glu) in a two-step reaction: glutamate is first activated by ATP to form Glu-AMP and then transferred to the acceptor end of tRNA(Glu). This Erwinia tasmaniensis (strain DSM 17950 / CFBP 7177 / CIP 109463 / NCPPB 4357 / Et1/99) protein is Glutamate--tRNA ligase.